The chain runs to 415 residues: Serine hydroxymethyltransferase (415 aa).

(6S)-5,6,7,8-tetrahydrofolate is bound by residues leucine 117 and 121–123 (GHL). Lysine 226 is modified (N6-(pyridoxal phosphate)lysine). 349 to 351 (SPF) lines the (6S)-5,6,7,8-tetrahydrofolate pocket.

It belongs to the SHMT family. In terms of assembly, homodimer. It depends on pyridoxal 5'-phosphate as a cofactor.

It is found in the cytoplasm. It catalyses the reaction (6R)-5,10-methylene-5,6,7,8-tetrahydrofolate + glycine + H2O = (6S)-5,6,7,8-tetrahydrofolate + L-serine. Its pathway is one-carbon metabolism; tetrahydrofolate interconversion. It participates in amino-acid biosynthesis; glycine biosynthesis; glycine from L-serine: step 1/1. In terms of biological role, catalyzes the reversible interconversion of serine and glycine with tetrahydrofolate (THF) serving as the one-carbon carrier. This reaction serves as the major source of one-carbon groups required for the biosynthesis of purines, thymidylate, methionine, and other important biomolecules. Also exhibits THF-independent aldolase activity toward beta-hydroxyamino acids, producing glycine and aldehydes, via a retro-aldol mechanism. The polypeptide is Serine hydroxymethyltransferase (Geobacter sp. (strain M21)).